The chain runs to 366 residues: Chorismate synthase (366 aa).

Arg48 is a binding site for NADP(+). FMN-binding positions include 125–127, 241–242, Gly285, 300–304, and Arg326; these read RSS, NA, and KPTSS.

Belongs to the chorismate synthase family. In terms of assembly, homotetramer. Requires FMNH2 as cofactor.

It carries out the reaction 5-O-(1-carboxyvinyl)-3-phosphoshikimate = chorismate + phosphate. The protein operates within metabolic intermediate biosynthesis; chorismate biosynthesis; chorismate from D-erythrose 4-phosphate and phosphoenolpyruvate: step 7/7. In terms of biological role, catalyzes the anti-1,4-elimination of the C-3 phosphate and the C-6 proR hydrogen from 5-enolpyruvylshikimate-3-phosphate (EPSP) to yield chorismate, which is the branch point compound that serves as the starting substrate for the three terminal pathways of aromatic amino acid biosynthesis. This reaction introduces a second double bond into the aromatic ring system. The protein is Chorismate synthase of Roseobacter denitrificans (strain ATCC 33942 / OCh 114) (Erythrobacter sp. (strain OCh 114)).